The primary structure comprises 164 residues: UPF0305 protein MJ0646 (164 aa).

Belongs to the UPF0305 family.

The polypeptide is UPF0305 protein MJ0646 (Methanocaldococcus jannaschii (strain ATCC 43067 / DSM 2661 / JAL-1 / JCM 10045 / NBRC 100440) (Methanococcus jannaschii)).